The sequence spans 196 residues: DnaA initiator-associating protein DiaA (196 aa).

Positions 34–196 (MVQSLLNGNK…DNTLFPHQND (163 aa)) constitute an SIS domain.

It belongs to the SIS family. DiaA subfamily. As to quaternary structure, homotetramer; dimer of dimers.

Functionally, required for the timely initiation of chromosomal replication via direct interactions with the DnaA initiator protein. The chain is DnaA initiator-associating protein DiaA from Pectobacterium atrosepticum (strain SCRI 1043 / ATCC BAA-672) (Erwinia carotovora subsp. atroseptica).